A 588-amino-acid chain; its full sequence is Aspartate--tRNA ligase (588 aa).

Glutamate 172 lines the L-aspartate pocket. The interval glutamine 196–lysine 199 is aspartate. L-aspartate is bound at residue arginine 218. Residues arginine 218–glutamate 220 and glutamine 227 each bind ATP. L-aspartate is bound at residue histidine 449. Residue glutamate 483 participates in ATP binding. Arginine 490 is an L-aspartate binding site. Glycine 535 to arginine 538 contacts ATP.

The protein belongs to the class-II aminoacyl-tRNA synthetase family. Type 1 subfamily. Homodimer.

Its subcellular location is the cytoplasm. It carries out the reaction tRNA(Asp) + L-aspartate + ATP = L-aspartyl-tRNA(Asp) + AMP + diphosphate. Catalyzes the attachment of L-aspartate to tRNA(Asp) in a two-step reaction: L-aspartate is first activated by ATP to form Asp-AMP and then transferred to the acceptor end of tRNA(Asp). The polypeptide is Aspartate--tRNA ligase (Haemophilus influenzae (strain PittEE)).